The chain runs to 430 residues: Phosphomethylpyrimidine synthase (430 aa).

Substrate is bound by residues Asn68, Met96, Tyr125, His164, 186–188 (SRG), 227–230 (DALR), and Glu266. Residue His270 coordinates Zn(2+). Residue Tyr293 coordinates substrate. Residue His334 coordinates Zn(2+). The [4Fe-4S] cluster site is built by Cys410, Cys413, and Cys417.

This sequence belongs to the ThiC family. [4Fe-4S] cluster is required as a cofactor.

It catalyses the reaction 5-amino-1-(5-phospho-beta-D-ribosyl)imidazole + S-adenosyl-L-methionine = 4-amino-2-methyl-5-(phosphooxymethyl)pyrimidine + CO + 5'-deoxyadenosine + formate + L-methionine + 3 H(+). The protein operates within cofactor biosynthesis; thiamine diphosphate biosynthesis. Functionally, catalyzes the synthesis of the hydroxymethylpyrimidine phosphate (HMP-P) moiety of thiamine from aminoimidazole ribotide (AIR) in a radical S-adenosyl-L-methionine (SAM)-dependent reaction. In Pyrobaculum aerophilum (strain ATCC 51768 / DSM 7523 / JCM 9630 / CIP 104966 / NBRC 100827 / IM2), this protein is Phosphomethylpyrimidine synthase.